The primary structure comprises 467 residues: Siroheme synthase (467 aa).

The tract at residues 1 to 203 (METLPIFMKL…GQEEAARHAM (203 aa)) is precorrin-2 dehydrogenase /sirohydrochlorin ferrochelatase. Residues 22-23 (EI) and 43-44 (PE) contribute to the NAD(+) site. S128 is modified (phosphoserine). Residues 216–467 (GEVYLVGGGP…APSPEVVSAG (252 aa)) are uroporphyrinogen-III C-methyltransferase. An S-adenosyl-L-methionine-binding site is contributed by P225. The active-site Proton acceptor is D248. K270 (proton donor) is an active-site residue. Residues 301–303 (GGD), I306, 331–332 (TA), M383, and G412 each bind S-adenosyl-L-methionine.

This sequence in the N-terminal section; belongs to the precorrin-2 dehydrogenase / sirohydrochlorin ferrochelatase family. It in the C-terminal section; belongs to the precorrin methyltransferase family.

It catalyses the reaction uroporphyrinogen III + 2 S-adenosyl-L-methionine = precorrin-2 + 2 S-adenosyl-L-homocysteine + H(+). It carries out the reaction precorrin-2 + NAD(+) = sirohydrochlorin + NADH + 2 H(+). The enzyme catalyses siroheme + 2 H(+) = sirohydrochlorin + Fe(2+). It functions in the pathway cofactor biosynthesis; adenosylcobalamin biosynthesis; precorrin-2 from uroporphyrinogen III: step 1/1. The protein operates within cofactor biosynthesis; adenosylcobalamin biosynthesis; sirohydrochlorin from precorrin-2: step 1/1. It participates in porphyrin-containing compound metabolism; siroheme biosynthesis; precorrin-2 from uroporphyrinogen III: step 1/1. Its pathway is porphyrin-containing compound metabolism; siroheme biosynthesis; siroheme from sirohydrochlorin: step 1/1. It functions in the pathway porphyrin-containing compound metabolism; siroheme biosynthesis; sirohydrochlorin from precorrin-2: step 1/1. Functionally, multifunctional enzyme that catalyzes the SAM-dependent methylations of uroporphyrinogen III at position C-2 and C-7 to form precorrin-2 via precorrin-1. Then it catalyzes the NAD-dependent ring dehydrogenation of precorrin-2 to yield sirohydrochlorin. Finally, it catalyzes the ferrochelation of sirohydrochlorin to yield siroheme. The sequence is that of Siroheme synthase from Methylobacillus flagellatus (strain ATCC 51484 / DSM 6875 / VKM B-1610 / KT).